A 372-amino-acid chain; its full sequence is MTATRGLEGVVATTSSVSSIIDDTLTYVGYDIDDLTENASFEEIIYLLWHLRLPNKKELEELKQQLAKEAAVPQEIIEHFKSYSLENVHPMAALRTAISLLGLLDSEADTMNPEANYRKAIRLQAKVPGLVAAFSRIRKGLEPVEPREDYGIAENFLYTLNGEEPSPIEVEAFNKALILHADHELNASTFTARVCVATLSDIYSGITAAIGALKGPLHGGANEGVMKMLTEIGEVENAEPYIRAKLEKKEKIMGFGHRVYKHGDPRAKHLKEMSKRLTNLTGESKWYEMSIRIEDIVTSEKKLPPNVDFYSASVYHSLGIDHDLFTPIFAVSRMSGWLAHILEQYDNNRLIRPRADYTGPDKQKFVPIEERA.

H257 is an active-site residue. Residue S284 is modified to Phosphoserine. Residue D308 is part of the active site.

The protein belongs to the citrate synthase family. In terms of assembly, homodimer.

The enzyme catalyses oxaloacetate + acetyl-CoA + H2O = citrate + CoA + H(+). The protein operates within carbohydrate metabolism; tricarboxylic acid cycle; isocitrate from oxaloacetate: step 1/2. Might regulate the synthesis and function of enzymes involved in later enzymatic steps of Krebs cycle. Loss in activity results in sporulation defect. This chain is Citrate synthase 2 (citZ), found in Bacillus subtilis (strain 168).